The following is a 448-amino-acid chain: Asparagine--tRNA ligase (448 aa).

This sequence belongs to the class-II aminoacyl-tRNA synthetase family. Homodimer.

It is found in the cytoplasm. The enzyme catalyses tRNA(Asn) + L-asparagine + ATP = L-asparaginyl-tRNA(Asn) + AMP + diphosphate + H(+). This Streptococcus pyogenes serotype M2 (strain MGAS10270) protein is Asparagine--tRNA ligase.